A 62-amino-acid polypeptide reads, in one-letter code: Large ribosomal subunit protein bL32m (62 aa).

Belongs to the bacterial ribosomal protein bL32 family.

The protein resides in the mitochondrion. This chain is Large ribosomal subunit protein bL32m (RPL32), found in Reclinomonas americana.